We begin with the raw amino-acid sequence, 197 residues long: ATP-dependent Clp protease proteolytic subunit (197 aa).

The active-site Nucleophile is the Ser-98. The active site involves His-123.

Belongs to the peptidase S14 family. In terms of assembly, fourteen ClpP subunits assemble into 2 heptameric rings which stack back to back to give a disk-like structure with a central cavity, resembling the structure of eukaryotic proteasomes.

Its subcellular location is the cytoplasm. It catalyses the reaction Hydrolysis of proteins to small peptides in the presence of ATP and magnesium. alpha-casein is the usual test substrate. In the absence of ATP, only oligopeptides shorter than five residues are hydrolyzed (such as succinyl-Leu-Tyr-|-NHMec, and Leu-Tyr-Leu-|-Tyr-Trp, in which cleavage of the -Tyr-|-Leu- and -Tyr-|-Trp bonds also occurs).. Functionally, cleaves peptides in various proteins in a process that requires ATP hydrolysis. Has a chymotrypsin-like activity. Plays a major role in the degradation of misfolded proteins. This Pediococcus pentosaceus (strain ATCC 25745 / CCUG 21536 / LMG 10740 / 183-1w) protein is ATP-dependent Clp protease proteolytic subunit.